We begin with the raw amino-acid sequence, 632 residues long: Putative ankyrin repeat protein L767 (632 aa).

5 ANK repeats span residues 61–97 (YGNTFMTNRIIKNTKYSLLDVNTVQMLLDYGDPDYEF), 228–250 (FDNEKLFYTVLYDSFELTKYIVE), 251–282 (KGFYYDFDSVINSDINLEMLKFFIELGNNLTD), 345–374 (NLDILMKTSILRENINMIKKCIEYGINVDD), and 517–546 (NSIELLFVVVLSENIDLFKLLLEINCNDTD).

The chain is Putative ankyrin repeat protein L767 from Acanthamoeba polyphaga mimivirus (APMV).